We begin with the raw amino-acid sequence, 470 residues long: ATP synthase subunit beta (470 aa).

An ATP-binding site is contributed by 155-162; sequence GGAGVGKT.

It belongs to the ATPase alpha/beta chains family. F-type ATPases have 2 components, CF(1) - the catalytic core - and CF(0) - the membrane proton channel. CF(1) has five subunits: alpha(3), beta(3), gamma(1), delta(1), epsilon(1). CF(0) has three main subunits: a(1), b(2) and c(9-12). The alpha and beta chains form an alternating ring which encloses part of the gamma chain. CF(1) is attached to CF(0) by a central stalk formed by the gamma and epsilon chains, while a peripheral stalk is formed by the delta and b chains.

It is found in the cell membrane. It catalyses the reaction ATP + H2O + 4 H(+)(in) = ADP + phosphate + 5 H(+)(out). In terms of biological role, produces ATP from ADP in the presence of a proton gradient across the membrane. The catalytic sites are hosted primarily by the beta subunits. This Lacticaseibacillus casei (Lactobacillus casei) protein is ATP synthase subunit beta.